The chain runs to 206 residues: N-(5'-phosphoribosyl)anthranilate isomerase (206 aa).

Belongs to the TrpF family.

The catalysed reaction is N-(5-phospho-beta-D-ribosyl)anthranilate = 1-(2-carboxyphenylamino)-1-deoxy-D-ribulose 5-phosphate. Its pathway is amino-acid biosynthesis; L-tryptophan biosynthesis; L-tryptophan from chorismate: step 3/5. This is N-(5'-phosphoribosyl)anthranilate isomerase from Pseudomonas syringae pv. syringae (strain B728a).